The chain runs to 355 residues: Agamous-like MADS-box protein AGL81 (355 aa).

The segment at 1–22 (MAIRSLPSSSRCSSSSSSSSYS) is disordered. The 43-residue stretch at 26 to 68 (TSLSNRLETIFKKASELCTLCDIEACVIYYGPDGELKTWPPER) folds into the MADS-box domain. Over residues 162-174 (VESQKHKETKPDH) the composition is skewed to basic and acidic residues. The segment at 162–186 (VESQKHKETKPDHQSLASSSLNHQT) is disordered. Residues 176-186 (SLASSSLNHQT) show a composition bias toward polar residues.

As to quaternary structure, interacts with MEE14/CBP1.

It localises to the nucleus. Its function is as follows. Probable transcription factor that may function in the maintenance of the proper function of the central cell in pollen tube attraction. In Arabidopsis thaliana (Mouse-ear cress), this protein is Agamous-like MADS-box protein AGL81.